The following is a 992-amino-acid chain: MKTRFNTFDIICGVAELQKLVGWRVNQIYDVDNKTYLFRMQGTGAVEKVTLLIESGTRFHTTRFEWPKNMAPSGFSMKLRKHLKNKRLEKVQQMGSDRIVDFQFGTGDAAYHVILELYDRGNVILTDYELTTLYILRPHTEGENLRFAMREKYPVERAKQPTKELELEALVKLLENARNGDYLRQILTPNLDCGPAVIEHVLLSHGLDNHVIKKETTEETPEAEDKPEKGGKKQRKKQQNTKLEQKPFDMVNDLPILQQAVKDAQELIAEGNSGKSKGYIIQVKEEKPTENGTVEFFFRNIEFHPYLFIQFKNFEKATFESFMEAVDEFYSTQESQKIDMKTLQQEREALKKLSNVKNDHAKRLEELTKVQDVDRKKAELITSNQSLVDNAIRAVQSAIASQLSWPDIHELVKEAQANGDAVASSIKQLKLETNHISLMLSDPYDNDEDDDLKDPEVTVVDVDLALSAWANARRYYDMKRSAAQKEKKTVDASQKALKSAERKTQQTLKEVRTISNIVKARKVFWFEKFYWFISSENYLVIGGRDAQQNELIVKRYMRPKDIYVHAEIQGASSVIIQNPTGEEIPPKTLLEAGSMAISYSVAWDAKVVTNSYWVTSDQVSKTAPTGEYLATGSFMIRGKKNFLPSCHLTMGLSLLFKLEDSFIERHLGERKVRSLEDDQIDPNVKENEVEHDLLSDNEDADSNINLSEPSSNTEITAFPNTEVKIEHDTGRIIVRSDSVNPEIEETKESEVVLDKILKKTDDEETTIILAGPSRKKQVSAKKTKEDKARAKQEAAKQEVPPVSSEPKNPSQVKRGQKGKLKKMKQKYKDQDDEEREIRMMILKSSGKEKPQASADKVVEKSESTKEYVKPEKSAAPKNPVELDDADEVPVGGDVDVLNSLTGQPHEGDELLFAIPVVAPYQALQNYKFKVKLTPGTGKRGKAAKLALNIFAKEKSCSAREKDLLKSIKEESLARNIPGKVKLSAPQLQKYHK.

Positions 214-231 (KETTEETPEAEDKPEKGG) are enriched in basic and acidic residues. A disordered region spans residues 214–245 (KETTEETPEAEDKPEKGGKKQRKKQQNTKLEQ). 2 coiled-coil regions span residues 331 to 370 (STQE…LTKV) and 481 to 514 (SAAQ…VRTI). Disordered regions lie at residues 688–715 (EVEH…NTEI) and 771–895 (GPSR…GDVD). Residues 702 to 715 (SNINLSEPSSNTEI) show a composition bias toward polar residues. A coiled-coil region spans residues 774-839 (RKKQVSAKKT…QDDEEREIRM (66 aa)). Basic and acidic residues predominate over residues 782-796 (KTKEDKARAKQEAAK). Residues 814–825 (RGQKGKLKKMKQ) are compositionally biased toward basic residues. A compositionally biased stretch (basic and acidic residues) spans 845–874 (SGKEKPQASADKVVEKSESTKEYVKPEKSA).

It belongs to the NEMF family. Component of the ribosome quality control complex (RQC), composed of at least the E3 ubiquitin ligase l(3)76BDr/LTN1 and Clbn/NEMF associated with the 60S ribosomal subunit. The complex probably also contains TCF25 as well as TER94/VCP and its ubiquitin-binding cofactors. Interacts (via its C-terminus) with pros (via its homeobox). Interacts (via its N-terminus) with emb. Expressed in enterocytes (at protein level).

It is found in the nucleus. It localises to the cytoplasm. The protein resides in the mitochondrion outer membrane. In terms of biological role, key component of the ribosome quality control complex (RQC), a ribosome-associated complex that mediates the extraction of incompletely synthesized nascent chains from stalled ribosomes as well as their ubiquitin-mediated proteasomal degradation. Thereby, frees 60S subunit ribosomes from the stalled translation complex and prevents the accumulation of nascent polypeptide chains that are potentially toxic for the cell. Within the RQC complex, Clbn/NEMF specifically binds stalled 60S ribosomal subunits by recognizing an exposed, nascent chain-conjugated tRNA moiety. Following binding to stalled 60S ribosomal subunits, Clbn/NEMF mediates CAT tailing by recruiting alanine-charged tRNA to the A-site and directing the elongation of stalled nascent chains independently of mRNA or 40S subunits, leading to non-templated C-terminal alanine extensions (CAT tails). On mitochondrial surface, plays a role in mitochondrial-stress induced translational termination impairment and protein carboxyl terminal extension (MISTERMINATE). Plays a role in regulating nuclear transport possibly through directly binding to both emb and cargo proteins. Plays a role in the regulation of G1-to-S cell cycle transition. Regulates S phase checkpoint by antagonizing E2F1 activity. Together with hid and tefu/ATM, plays a role in DNA damage-induced apoptosis through both p53-dependent and -independent activity. Plays an essential role in the regulation of mitochondrial structure and redox state in enterocytes which is essential for the control of intestinal stem cells proliferation and intestinal homeostasis. This Drosophila melanogaster (Fruit fly) protein is Ribosome quality control complex subunit NEMF homolog.